We begin with the raw amino-acid sequence, 204 residues long: Shikimate kinase (204 aa).

35-40 serves as a coordination point for ATP; that stretch reads ASGKST. S39 provides a ligand contact to Mg(2+). Positions 57, 81, and 103 each coordinate substrate. An ATP-binding site is contributed by R142. Position 169 (R169) interacts with substrate.

The protein belongs to the shikimate kinase family. As to quaternary structure, monomer. The cofactor is Mg(2+).

Its subcellular location is the cytoplasm. The enzyme catalyses shikimate + ATP = 3-phosphoshikimate + ADP + H(+). The protein operates within metabolic intermediate biosynthesis; chorismate biosynthesis; chorismate from D-erythrose 4-phosphate and phosphoenolpyruvate: step 5/7. In terms of biological role, catalyzes the specific phosphorylation of the 3-hydroxyl group of shikimic acid using ATP as a cosubstrate. In Salinibacter ruber (strain DSM 13855 / M31), this protein is Shikimate kinase.